The chain runs to 287 residues: Ribonuclease Z (287 aa).

7 residues coordinate Zn(2+): His64, His66, Asp68, His69, His124, Asp191, and His250. Asp68 (proton acceptor) is an active-site residue.

It belongs to the RNase Z family. Homodimer. Zn(2+) is required as a cofactor.

It carries out the reaction Endonucleolytic cleavage of RNA, removing extra 3' nucleotides from tRNA precursor, generating 3' termini of tRNAs. A 3'-hydroxy group is left at the tRNA terminus and a 5'-phosphoryl group is left at the trailer molecule.. Functionally, zinc phosphodiesterase, which displays some tRNA 3'-processing endonuclease activity. Probably involved in tRNA maturation, by removing a 3'-trailer from precursor tRNA. This Pyrobaculum neutrophilum (strain DSM 2338 / JCM 9278 / NBRC 100436 / V24Sta) (Thermoproteus neutrophilus) protein is Ribonuclease Z.